The chain runs to 204 residues: Nascent polypeptide-associated complex subunit alpha (204 aa).

Over residues 1–19 (MADPRVEELPDEEVPKTNV) the composition is skewed to basic and acidic residues. Disordered stretches follow at residues 1-48 (MADP…HSRN) and 119-167 (LAAA…GLEA). The span at 22–32 (AGSDSESEAGE) shows a compositional bias: acidic residues. Residues 46-111 (SRNEKKARKA…AKIEDLNSQA (66 aa)) enclose the NAC-A/B domain. Low complexity predominate over residues 119–128 (LAAAEAAAGE). Basic and acidic residues predominate over residues 129-151 (HAGHDHDHDHGKGKAPETEAKKE). Positions 152–164 (EEEDDGEEVDETG) are enriched in acidic residues. A UBA domain is found at 165–204 (LEAKDIELVMAQANVSRKKAVKALRENDNDIVNSIMALSI).

It belongs to the NAC-alpha family. In terms of assembly, part of the nascent polypeptide-associated complex (NAC), consisting of egd2 and egd1. NAC associates with ribosomes via egd1.

It localises to the cytoplasm. Its subcellular location is the nucleus. Functionally, component of the nascent polypeptide-associated complex (NAC), a dynamic component of the ribosomal exit tunnel, protecting the emerging polypeptides from interaction with other cytoplasmic proteins to ensure appropriate nascent protein targeting. The NAC complex also promotes mitochondrial protein import by enhancing productive ribosome interactions with the outer mitochondrial membrane and blocks the inappropriate interaction of ribosomes translating non-secretory nascent polypeptides with translocation sites in the membrane of the endoplasmic reticulum. Egd2 may also be involved in transcription regulation. In Aspergillus clavatus (strain ATCC 1007 / CBS 513.65 / DSM 816 / NCTC 3887 / NRRL 1 / QM 1276 / 107), this protein is Nascent polypeptide-associated complex subunit alpha (egd2).